The chain runs to 156 residues: Small ribosomal subunit protein uS7 (156 aa).

It belongs to the universal ribosomal protein uS7 family. In terms of assembly, part of the 30S ribosomal subunit. Contacts proteins S9 and S11.

One of the primary rRNA binding proteins, it binds directly to 16S rRNA where it nucleates assembly of the head domain of the 30S subunit. Is located at the subunit interface close to the decoding center, probably blocks exit of the E-site tRNA. This is Small ribosomal subunit protein uS7 from Novosphingobium aromaticivorans (strain ATCC 700278 / DSM 12444 / CCUG 56034 / CIP 105152 / NBRC 16084 / F199).